We begin with the raw amino-acid sequence, 236 residues long: Small ribosomal subunit protein uS2c (236 aa).

It belongs to the universal ribosomal protein uS2 family.

The protein resides in the plastid. The polypeptide is Small ribosomal subunit protein uS2c (rps2) (Cuscuta exaltata (Tall dodder)).